We begin with the raw amino-acid sequence, 596 residues long: Choline dehydrogenase, mitochondrial (596 aa).

The N-terminal 34 residues, Met-1 to Ala-34, are a transit peptide targeting the mitochondrion. Thr-44–Glu-73 contacts FAD. An N6-succinyllysine modification is found at Lys-438. An N6-acetyllysine; alternate mark is found at Lys-486 and Lys-498. Lys-486 and Lys-498 each carry N6-succinyllysine; alternate. Residue His-513 is the Proton acceptor of the active site. Position 582 is an N6-acetyllysine (Lys-582).

This sequence belongs to the GMC oxidoreductase family. FAD serves as cofactor. Acetylation of Lys-498 is observed in liver mitochondria from fasted mice but not from fed mice.

The protein resides in the mitochondrion inner membrane. The enzyme catalyses choline + A = betaine aldehyde + AH2. The protein operates within amine and polyamine biosynthesis; betaine biosynthesis via choline pathway; betaine aldehyde from choline (cytochrome c reductase route): step 1/1. This Mus musculus (Mouse) protein is Choline dehydrogenase, mitochondrial (Chdh).